Here is a 94-residue protein sequence, read N- to C-terminus: RNA-binding protein Hfq (94 aa).

The Sm domain maps to 9–68 (DPFLNALRRERVPVSIYLVNGIKLQGQVESFDQFVILLKNTVSQMVYKHAISTVVPARPF). The tract at residues 70–94 (VSAHHSSPAPTPAGGFNGQNDETSE) is disordered.

It belongs to the Hfq family. Homohexamer.

Functionally, RNA chaperone that binds small regulatory RNA (sRNAs) and mRNAs to facilitate mRNA translational regulation in response to envelope stress, environmental stress and changes in metabolite concentrations. Also binds with high specificity to tRNAs. The chain is RNA-binding protein Hfq from Shewanella woodyi (strain ATCC 51908 / MS32).